A 383-amino-acid chain; its full sequence is Acetylornithine deacetylase (383 aa).

His-80 provides a ligand contact to Zn(2+). Residue Asp-82 is part of the active site. Asp-112 provides a ligand contact to Zn(2+). Glu-144 is a catalytic residue. 3 residues coordinate Zn(2+): Glu-145, Glu-169, and His-355.

This sequence belongs to the peptidase M20A family. ArgE subfamily. As to quaternary structure, homodimer. The cofactor is Zn(2+). It depends on Co(2+) as a cofactor. Glutathione is required as a cofactor.

The protein resides in the cytoplasm. It catalyses the reaction N(2)-acetyl-L-ornithine + H2O = L-ornithine + acetate. It participates in amino-acid biosynthesis; L-arginine biosynthesis; L-ornithine from N(2)-acetyl-L-ornithine (linear): step 1/1. Functionally, catalyzes the hydrolysis of the amide bond of N(2)-acetylated L-amino acids. Cleaves the acetyl group from N-acetyl-L-ornithine to form L-ornithine, an intermediate in L-arginine biosynthesis pathway, and a branchpoint in the synthesis of polyamines. This chain is Acetylornithine deacetylase, found in Salmonella typhi.